The chain runs to 105 residues: Large ribosomal subunit protein uL18c (105 aa).

The protein belongs to the universal ribosomal protein uL18 family. In terms of assembly, part of the 50S ribosomal subunit; contacts the 5S rRNA.

The protein localises to the plastid. Its subcellular location is the chloroplast. Functionally, binds 5S rRNA, forms part of the central protuberance of the 50S subunit. The protein is Large ribosomal subunit protein uL18c (rpl18) of Gracilaria tenuistipitata var. liui (Red alga).